We begin with the raw amino-acid sequence, 636 residues long: Probable potassium transport system protein Kup (636 aa).

12 helical membrane-spanning segments follow: residues 22-42 (VGLLVAAVGVVYGDIGTSPLY), 64-84 (ILSLILWSLLWVVSFKYVMFI), 115-135 (LMVICGLIGASLFYGDSMITP), 150-170 (FDGIDHWVVPISLVVLVALFL), 182-202 (LFGPIMVTWFLALGALGVHGI), 220-240 (FFVVHPGIGVAILGAVVLALT), 261-281 (WFILVLPALVLNYFGQGALLL), 293-313 (LLAPGWALLPLVGLATMATVI), 351-371 (IYIGAVNWTLMVGVVLLVIGF), 383-403 (VAVTGTMLITTVLVSAVMLLL), 408-428 (PLLAVPILVGFLLVDGLFFAA), and 433-453 (IAQGGAFPVLAGGVLYLLMST).

Belongs to the HAK/KUP transporter (TC 2.A.72) family.

It localises to the cell inner membrane. It catalyses the reaction K(+)(in) + H(+)(in) = K(+)(out) + H(+)(out). Functionally, transport of potassium into the cell. Likely operates as a K(+):H(+) symporter. This Pseudomonas putida (strain ATCC 47054 / DSM 6125 / CFBP 8728 / NCIMB 11950 / KT2440) protein is Probable potassium transport system protein Kup.